Here is a 142-residue protein sequence, read N- to C-terminus: Small ribosomal subunit protein bS18c (142 aa).

A disordered region spans residues 1–21; the sequence is MDRITGPFRKSKKSFRKPLPP.

This sequence belongs to the bacterial ribosomal protein bS18 family. In terms of assembly, part of the 30S ribosomal subunit.

The protein localises to the plastid. This is Small ribosomal subunit protein bS18c from Cuscuta gronovii (Common dodder).